The following is a 1223-amino-acid chain: MAPLRALLSYLLPLHCALCAAAGSRTPELHLSGKLSDYGVTVPCSTDFRGRFLSHVVSGPAAASAGSMVVDTPPTLPRHSSHLRVARSPLHPGGTLWPGRVGRHSLYFNVTVFGKELHLRLRPNRRLVVPGSSVEWQEDFRELFRQPLRQECVYTGGVTGMPGAAVAISNCDGLAGLIRTDSTDFFIEPLERGQQEKEASGRTHVVYRREAVQQEWAEPDGDLHNEAFGLGDLPNLLGLVGDQLGDTERKRRHAKPGSYSIEVLLVVDDSVVRFHGKEHVQNYVLTLMNIVDEIYHDESLGVHINIALVRLIMVGYRQSLSLIERGNPSRSLEQVCRWAHSQQRQDPSHAEHHDHVVFLTRQDFGPSGYAPVTGMCHPLRSCALNHEDGFSSAFVIAHETGHVLGMEHDGQGNGCADETSLGSVMAPLVQAAFHRFHWSRCSKLELSRYLPSYDCLLDDPFDPAWPQPPELPGINYSMDEQCRFDFGSGYQTCLAFRTFEPCKQLWCSHPDNPYFCKTKKGPPLDGTECAPGKWCFKGHCIWKSPEQTYGQDGGWSSWTKFGSCSRSCGGGVRSRSRSCNNPSPAYGGRLCLGPMFEYQVCNSEECPGTYEDFRAQQCAKRNSYYVHQNAKHSWVPYEPDDDAQKCELICQSADTGDVVFMNQVVHDGTRCSYRDPYSVCARGECVPVGCDKEVGSMKADDKCGVCGGDNSHCRTVKGTLGKASKQAGALKLVQIPAGARHIQIEALEKSPHRIVVKNQVTGSFILNPKGKEATSRTFTAMGLEWEDAVEDAKESLKTSGPLPEAIAILALPPTEGGPRSSLAYKYVIHEDLLPLIGSNNVLLEEMDTYEWALKSWAPCSKACGGGIQFTKYGCRRRRDHHMVQRHLCDHKKRPKPIRRRCNQHPCSQPVWVTEEWGACSRSCGKLGVQTRGIQCLLPLSNGTHKVMPAKACAGDRPEARRPCLRVPCPAQWRLGAWSQCSATCGEGIQQRQVVCRTNANSLGHCEGDRPDTVQVCSLPACGGNHQNSTVRADVWELGTPEGQWVPQSEPLHPINKISSTEPCTGDRSVFCQMEVLDRYCSIPGYHRLCCVSCIKKASGPNPGPDPGPTSLPPFSTPGSPLPGPQDPADAAEPPGKPTGSEDHQHGRATQLPGALDTSSPGTQHPFAPETPIPGASWSISPTTPGGLPWGWTQTPTPVPEDKGQPGEDLRHPGTSLPAASPVT.

The first 22 residues, 1–22 (MAPLRALLSYLLPLHCALCAAA), serve as a signal peptide directing secretion. The propeptide occupies 23-252 (GSRTPELHLS…QLGDTERKRR (230 aa)). N-linked (GlcNAc...) asparagine glycosylation occurs at Asn109. The 202-residue stretch at 259 to 460 (YSIEVLLVVD…PSYDCLLDDP (202 aa)) folds into the Peptidase M12B domain. 3 disulfide bridges follow: Cys336-Cys382, Cys376-Cys455, and Cys415-Cys441. A Zn(2+)-binding site is contributed by His398. Residue Glu399 is part of the active site. Zn(2+) contacts are provided by His402 and His408. Residues 461-551 (FDPAWPQPPE…WKSPEQTYGQ (91 aa)) form the Disintegrin domain. Asn475 is a glycosylation site (N-linked (GlcNAc...) asparagine). 7 disulfides stabilise this stretch: Cys482–Cys507, Cys493–Cys516, Cys502–Cys535, Cys529–Cys540, Cys564–Cys601, Cys568–Cys606, and Cys579–Cys591. The region spanning 552 to 607 (DGGWSSWTKFGSCSRSCGGGVRSRSRSCNNPSPAYGGRLCLGPMFEYQVCNSEECP) is the TSP type-1 1 domain. The interval 730 to 846 (LKLVQIPAGA…GSNNVLLEEM (117 aa)) is spacer. 3 consecutive TSP type-1 domains span residues 847 to 907 (DTYE…HPCS), 908 to 967 (QPVW…LRVP), and 968 to 1022 (CPAQ…PACG). An N-linked (GlcNAc...) asparagine glycan is attached at Asn941. Disulfide bonds link Cys980-Cys1016, Cys984-Cys1021, and Cys995-Cys1005. N-linked (GlcNAc...) asparagine glycosylation is present at Asn1027. Residues 1059–1097 (STEPCTGDRSVFCQMEVLDRYCSIPGYHRLCCVSCIKKA) enclose the PLAC domain. A disordered region spans residues 1100–1223 (PNPGPDPGPT…TSLPAASPVT (124 aa)). Pro residues predominate over residues 1101-1125 (NPGPDPGPTSLPPFSTPGSPLPGPQ). Over residues 1199–1211 (PEDKGQPGEDLRH) the composition is skewed to basic and acidic residues.

The precursor is cleaved by a furin endopeptidase. In terms of processing, glycosylated. Can be O-fucosylated by POFUT2 on a serine or a threonine residue found within the consensus sequence C1-X(2)-(S/T)-C2-G of the TSP type-1 repeat domains where C1 and C2 are the first and second cysteine residue of the repeat, respectively. Fucosylated repeats can then be further glycosylated by the addition of a beta-1,3-glucose residue by the glucosyltransferase, B3GALTL. Fucosylation mediates the efficient secretion of ADAMTS family members. Can also be C-glycosylated with one or two mannose molecules on tryptophan residues within the consensus sequence W-X-X-W of the TPRs, and N-glycosylated. These other glycosylations can also facilitate secretion. Expressed in retina and at low levels in brain, lung and placenta. High expression in fetal tissues.

The protein localises to the secreted. Its subcellular location is the extracellular space. It is found in the extracellular matrix. Functionally, has aminoprocollagen type I processing activity in the absence of ADAMTS2. Seems to be synthesized as a latent enzyme that requires activation to display aminoprocollagen peptidase activity. Cleaves lysyl oxidase LOX at a site downstream of its propeptide cleavage site to produce a short LOX form. This Homo sapiens (Human) protein is A disintegrin and metalloproteinase with thrombospondin motifs 14 (ADAMTS14).